Here is an 88-residue protein sequence, read N- to C-terminus: uncharacterized protein (88 aa).

This is an uncharacterized protein from Haloarcula hispanica (His1V).